A 562-amino-acid polypeptide reads, in one-letter code: Tubby-related protein 2 (562 aa).

The interval 1–81 (MDREGPRGPR…RRGEERFQSD (81 aa)) is disordered. A compositionally biased stretch (basic and acidic residues) spans 35–46 (QKLEQQRQLFEK). Ser152, Ser153, and Ser155 each carry phosphoserine. Residues 179–294 (LRRGWLASPG…SNHNAWNMTC (116 aa)) are disordered. At Thr211 the chain carries Phosphothreonine. Ser213 bears the Phosphoserine mark. A compositionally biased stretch (basic and acidic residues) spans 225-240 (DGDHGDLAPCKVEENT). Positions 285-294 (SNHNAWNMTC) are enriched in polar residues.

It belongs to the TUB family. In terms of tissue distribution, expressed in retina and testis.

It localises to the cytoplasm. Its subcellular location is the secreted. This Mus musculus (Mouse) protein is Tubby-related protein 2 (Tulp2).